Consider the following 737-residue polypeptide: Delta and Notch-like epidermal growth factor-related receptor (737 aa).

The N-terminal stretch at 1-25 is a signal peptide; it reads MPPRRAQAPGAPLLPVLALLPLLLG. Residues 26–640 are Extracellular-facing; it reads AGPQSGCLAS…LTNMPRHSLY (615 aa). EGF-like domains lie at 44–92 and 94–133; these read APGP…TYCQ and VADPCASNPCHHGNCSSSSSSSSDSYLCICNDGYEGLNCE. The tract at residues 44–133 is interaction with NOTCH1; it reads APGPCASQPC…NDGYEGLNCE (90 aa). Cystine bridges form between Cys48–Cys59, Cys53–Cys80, Cys82–Cys91, Cys98–Cys108, Cys103–Cys121, and Cys123–Cys132. The N-linked (GlcNAc...) asparagine glycan is linked to Asn204. 5 EGF-like domains span residues 309-348, 349-390, 392-428, 430-466, and 468-503; these read PGDSHSNDLECSGKGKCATKPSEATFSCTCQDQYIGTFCE, EFDA…ELCQ, KIDYCVLDPCRNGATCVSSLSGFTCQCLEGYFGSACE, KVDPCMSSPCQNNGTCYVDGVHFTCSCSPGFTGPTCA, and LVDFCALSPCAHGMCRSVGTSYKCLCDPGYHGLYCE. Disulfide bonds link Cys319–Cys336, Cys338–Cys347, Cys353–Cys364, Cys358–Cys378, Cys380–Cys389, Cys396–Cys407, Cys401–Cys416, Cys418–Cys427, Cys434–Cys445, Cys439–Cys454, Cys456–Cys465, Cys472–Cys482, Cys477–Cys491, Cys493–Cys502, Cys509–Cys520, Cys514–Cys529, Cys531–Cys540, Cys547–Cys558, Cys552–Cys567, Cys569–Cys578, Cys585–Cys596, Cys590–Cys605, and Cys607–Cys616. The EGF-like 8; calcium-binding domain maps to 505–541; that stretch reads EYNECLSAPCLNAATCRDLINGYECVCLAEYKGTHCE. The EGF-like 9 domain maps to 543-579; the sequence is YKDPCANISCLNGGTCDSEGLNGTCICAPGFTGEECD. N-linked (GlcNAc...) asparagine glycosylation occurs at Asn564. Residues 581 to 617 form the EGF-like 10; calcium-binding domain; the sequence is DINECDSNPCHHAGTCLDQPNGYTCHCPHGWVGANCE. Residues 641–661 form a helical membrane-spanning segment; sequence IIIGALCVAFILMLIILIVGI. At 662 to 737 the chain is on the cytoplasmic side; the sequence is CRISRIEYQG…LVTLIKTKDL (76 aa). Residues 677–680 are interaction with AP1G1 and somatodendritic targeting; the sequence is YEEF. The residue at position 685 (Ser685) is a Phosphoserine. Position 711 is a phosphotyrosine (Tyr711). Position 714 is a phosphothreonine (Thr714). At Tyr721 the chain carries Phosphotyrosine. A Phosphoserine modification is found at Ser722.

As to quaternary structure, interacts with AP1G1. Interacts with NOTCH1. N-glycosylated. As to expression, specifically expressed in brain neurons (at protein level).

The protein localises to the cell membrane. Functionally, mediates neuron-glia interaction during astrocytogenesis. May promote differentiation of Bergmann glia during cerebellar development by activating DELTEX-dependent NOTCH1 signaling. This is Delta and Notch-like epidermal growth factor-related receptor (Dner) from Mus musculus (Mouse).